The primary structure comprises 251 residues: Flap endonuclease Xni (251 aa).

Residue Asp-104 coordinates Mg(2+). The region spanning 160–250 (VLPRQLPDYW…SGNLQQLRLK (91 aa)) is the 5'-3' exonuclease domain. K(+)-binding residues include Leu-171, Ala-172, Pro-180, Val-182, and Val-185. The tract at residues 184 to 189 (GVGAKT) is interaction with DNA.

It belongs to the Xni family. Mg(2+) serves as cofactor. Requires K(+) as cofactor.

Its function is as follows. Has flap endonuclease activity. During DNA replication, flap endonucleases cleave the 5'-overhanging flap structure that is generated by displacement synthesis when DNA polymerase encounters the 5'-end of a downstream Okazaki fragment. This is Flap endonuclease Xni from Yersinia pestis bv. Antiqua (strain Nepal516).